A 284-amino-acid chain; its full sequence is 4-hydroxy-3-methylbut-2-enyl diphosphate reductase (284 aa).

A [4Fe-4S] cluster-binding site is contributed by C12. (2E)-4-hydroxy-3-methylbut-2-enyl diphosphate is bound by residues H40 and H72. H40 and H72 together coordinate dimethylallyl diphosphate. Residues H40 and H72 each coordinate isopentenyl diphosphate. C94 lines the [4Fe-4S] cluster pocket. H122 is a (2E)-4-hydroxy-3-methylbut-2-enyl diphosphate binding site. H122 contacts dimethylallyl diphosphate. Isopentenyl diphosphate is bound at residue H122. E124 (proton donor) is an active-site residue. T161 contributes to the (2E)-4-hydroxy-3-methylbut-2-enyl diphosphate binding site. C193 contributes to the [4Fe-4S] cluster binding site. The (2E)-4-hydroxy-3-methylbut-2-enyl diphosphate site is built by S221, N223, and S264. Dimethylallyl diphosphate contacts are provided by S221, N223, and S264. S221, N223, and S264 together coordinate isopentenyl diphosphate.

The protein belongs to the IspH family. Requires [4Fe-4S] cluster as cofactor.

The enzyme catalyses isopentenyl diphosphate + 2 oxidized [2Fe-2S]-[ferredoxin] + H2O = (2E)-4-hydroxy-3-methylbut-2-enyl diphosphate + 2 reduced [2Fe-2S]-[ferredoxin] + 2 H(+). The catalysed reaction is dimethylallyl diphosphate + 2 oxidized [2Fe-2S]-[ferredoxin] + H2O = (2E)-4-hydroxy-3-methylbut-2-enyl diphosphate + 2 reduced [2Fe-2S]-[ferredoxin] + 2 H(+). It functions in the pathway isoprenoid biosynthesis; dimethylallyl diphosphate biosynthesis; dimethylallyl diphosphate from (2E)-4-hydroxy-3-methylbutenyl diphosphate: step 1/1. Its pathway is isoprenoid biosynthesis; isopentenyl diphosphate biosynthesis via DXP pathway; isopentenyl diphosphate from 1-deoxy-D-xylulose 5-phosphate: step 6/6. In terms of biological role, catalyzes the conversion of 1-hydroxy-2-methyl-2-(E)-butenyl 4-diphosphate (HMBPP) into a mixture of isopentenyl diphosphate (IPP) and dimethylallyl diphosphate (DMAPP). Acts in the terminal step of the DOXP/MEP pathway for isoprenoid precursor biosynthesis. The chain is 4-hydroxy-3-methylbut-2-enyl diphosphate reductase from Dehalococcoides mccartyi (strain CBDB1).